The sequence spans 176 residues: Ribosome maturation factor RimM (176 aa).

The PRC barrel domain maps to 100–173 (EGEFHLLDLV…WLRLTPPPGL (74 aa)).

This sequence belongs to the RimM family. As to quaternary structure, binds ribosomal protein uS19.

Its subcellular location is the cytoplasm. Its function is as follows. An accessory protein needed during the final step in the assembly of 30S ribosomal subunit, possibly for assembly of the head region. Essential for efficient processing of 16S rRNA. May be needed both before and after RbfA during the maturation of 16S rRNA. It has affinity for free ribosomal 30S subunits but not for 70S ribosomes. This is Ribosome maturation factor RimM from Prochlorococcus marinus (strain MIT 9313).